Reading from the N-terminus, the 1877-residue chain is Neuron navigator 1 (1877 aa).

Met-1 is modified (N-acetylmethionine). The disordered stretch occupies residues 1-59 (MLGSSVKSVQPEVELSSGGGDEGADEPRGAGRKAAAADGRGMLPKRAKAPGGGGGMAKA). The segment covering 32 to 41 (RKAAAADGRG) has biased composition (low complexity). Phosphoserine is present on residues Ser-90, Ser-142, and Ser-152. The disordered stretch occupies residues 114–225 (DMAKAPKGLG…PVPSAKGQEE (112 aa)). Thr-159 carries the phosphothreonine modification. Ser-194 and Ser-199 each carry phosphoserine. Low complexity predominate over residues 205–214 (SSKAKAQKSS). The stretch at 255–280 (ESQRKRTVQNVLDLRQNLEETMSSLR) forms a coiled coil. The interval 294–336 (YDSDDANPRSVSSLSNRSSPLSWRYGQSSPRLQAGDAPSVGGS) is disordered. Phosphoserine is present on residues Ser-296, Ser-308, Ser-312, Ser-362, and Ser-391. A compositionally biased stretch (low complexity) spans 301–315 (PRSVSSLSNRSSPLS). Disordered stretches follow at residues 386 to 839 (KSGY…PLPS) and 892 to 989 (MSLP…PMSL). Composition is skewed to low complexity over residues 411-425 (DESS…DASD) and 433-448 (NASS…PTAS). 4 positions are modified to phosphoserine: Ser-452, Ser-474, Ser-476, and Ser-490. Positions 476–486 (SEEKAPKKLEY) are enriched in basic and acidic residues. Over residues 503 to 519 (ERPESCDDSSKGGELKK) the composition is skewed to basic and acidic residues. At Ser-528 the chain carries Phosphoserine. Thr-534 carries the post-translational modification Phosphothreonine. Position 541 is a phosphoserine (Ser-541). Thr-544 is modified (phosphothreonine). Basic and acidic residues predominate over residues 555–566 (GKPEGKATDKGK). The residue at position 572 (Thr-572) is a Phosphothreonine. Basic and acidic residues predominate over residues 581–591 (AGRDRLSDAKK). Polar residues-rich tracts occupy residues 615–635 (GTAT…QKSS) and 645–655 (RKTSLDVSNSA). Ser-648 carries the post-translational modification Phosphoserine. An Omega-N-methylarginine modification is found at Arg-688. Composition is skewed to polar residues over residues 698–710 (IDPS…QGGL) and 724–733 (GRTTPAPVNQ). A coiled-coil region spans residues 731 to 756 (VNQTDREKEKAKAKAVALDSDNISLK). A phosphoserine mark is found at Ser-750, Ser-754, Ser-760, Ser-797, and Ser-808. Residues 751–773 (DNISLKSIGSPESTPKNQASHPT) show a composition bias toward polar residues. Residues 805–818 (NSNSLDLPSSSDTT) are compositionally biased toward low complexity. Over residues 902–913 (TPVPTPPAPPAA) the composition is skewed to pro residues. Ser-1000 is modified (phosphoserine). Thr-1006 is subject to Phosphothreonine. The stretch at 1072-1163 (SSAEERMQSE…SEAQAVIQGA (92 aa)) forms a coiled coil. Thr-1170 is subject to Phosphothreonine. Disordered regions lie at residues 1172-1204 (KELR…KDAD), 1244-1306 (ATPD…EKKE), 1359-1383 (LKVA…LSSP), and 1810-1843 (KLYH…SLDS). A Phosphoserine modification is found at Ser-1181. Positions 1181–1200 (SSDSISSLNSITSHSSIGSS) are enriched in low complexity. A compositionally biased stretch (polar residues) spans 1246–1264 (PDSSAPSSPKLQHGSTETA). The residue at position 1265 (Ser-1265) is a Phosphoserine. A compositionally biased stretch (low complexity) spans 1265-1275 (SPSIKSSTSSS). Residues 1303–1362 (EKKEVSELRSELWEKEMKLTDIRLEALNSAHQLDQLRETMHNMQLEVDLLKAENDRLKVA) adopt a coiled-coil conformation. Positions 1366-1383 (SSGSTPGQVPGSSALSSP) are enriched in polar residues. The residue at position 1382 (Ser-1382) is a Phosphoserine.

Belongs to the Nav/unc-53 family. Interacts with tubulin. In terms of tissue distribution, broadly expressed at low levels. Expressed at high levels in heart, skeletal muscle and placenta.

The protein localises to the cytoplasm. The protein resides in the cytoskeleton. Its function is as follows. May be involved in neuronal migration. In Homo sapiens (Human), this protein is Neuron navigator 1 (NAV1).